We begin with the raw amino-acid sequence, 524 residues long: Zinc finger CCCH domain-containing protein 37 (524 aa).

Residues 19–39 (ASTVSPAPPPPQQPLPPKTGL) are disordered. Positions 24-35 (PAPPPPQQPLPP) are enriched in pro residues. 3 consecutive C3H1-type zinc fingers follow at residues 174-202 (RAGE…HPIW), 225-253 (RPGE…HPRE), and 268-296 (RPSE…HPKD). Residues 300–319 (PSSSQDIGSSVGLTSEPDAT) are disordered. C3H1-type zinc fingers lie at residues 340-368 (RSGE…HPER), 420-448 (RPGQ…HPAD), and 473-501 (REGA…HPPP). A disordered region spans residues 505-524 (MAKTTSEADAAGATNTDTTQ). Residues 512-524 (ADAAGATNTDTTQ) are compositionally biased toward low complexity.

Interacts with HEN4. Interacts with FLK and PEP. In terms of tissue distribution, highly expressed in inflorescences, at intermediate levels in leaves and stems and at lower levels in roots.

It is found in the nucleus speckle. Involved in flower development. Functions in floral reproductive organ identity by binding AGAMOUS (AG) pre-mRNA and promoting its processing. Functions in association with HUA2 and HEN4. This chain is Zinc finger CCCH domain-containing protein 37 (HUA1), found in Arabidopsis thaliana (Mouse-ear cress).